Reading from the N-terminus, the 212-residue chain is Interleukin-6 (212 aa).

A signal peptide spans 1-27 (MNSVSTSAFGPVAFSLGLLLVLPAAFP). C72 and C78 form a disulfide bridge. N73 carries N-linked (GlcNAc...) asparagine glycosylation. Position 81 is a phosphoserine (S81). C101 and C111 are disulfide-bonded. The N-linked (GlcNAc...) asparagine glycan is linked to N172.

The protein belongs to the IL-6 superfamily. Component of a hexamer of two molecules each of IL6, IL6R and IL6ST; first binds to IL6R to associate with the signaling subunit IL6ST. Interacts with IL6R (via the N-terminal ectodomain); this interaction may be affected by IL6R-binding with SORL1, hence decreasing IL6 cis signaling. Interacts with SORL1 (via the N-terminal ectodomain); this interaction leads to IL6 internalization and lysosomal degradation. May form a trimeric complex with the soluble SORL1 ectodomain and soluble IL6R receptor; this interaction might stabilize circulating IL6, hence promoting IL6 trans signaling.

It localises to the secreted. Its function is as follows. Cytokine with a wide variety of biological functions in immunity, tissue regeneration, and metabolism. Binds to IL6R, then the complex associates to the signaling subunit IL6ST/gp130 to trigger the intracellular IL6-signaling pathway. The interaction with the membrane-bound IL6R and IL6ST stimulates 'classic signaling', whereas the binding of IL6 and soluble IL6R to IL6ST stimulates 'trans-signaling'. Alternatively, 'cluster signaling' occurs when membrane-bound IL6:IL6R complexes on transmitter cells activate IL6ST receptors on neighboring receiver cells. In terms of biological role, IL6 is a potent inducer of the acute phase response. Rapid production of IL6 contributes to host defense during infection and tissue injury, but excessive IL6 synthesis is involved in disease pathology. In the innate immune response, is synthesized by myeloid cells, such as macrophages and dendritic cells, upon recognition of pathogens through toll-like receptors (TLRs) at the site of infection or tissue injury. In the adaptive immune response, is required for the differentiation of B cells into immunoglobulin-secreting cells. Plays a major role in the differentiation of CD4(+) T cell subsets. Essential factor for the development of T follicular helper (Tfh) cells that are required for the induction of germinal-center formation. Required to drive naive CD4(+) T cells to the Th17 lineage. Also required for proliferation of myeloma cells and the survival of plasmablast cells. Functionally, acts as an essential factor in bone homeostasis and on vessels directly or indirectly by induction of VEGF, resulting in increased angiogenesis activity and vascular permeability. Induces, through 'trans-signaling' and synergistically with IL1B and TNF, the production of VEGF. Involved in metabolic controls, is discharged into the bloodstream after muscle contraction increasing lipolysis and improving insulin resistance. 'Trans-signaling' in central nervous system also regulates energy and glucose homeostasis. Mediates, through GLP-1, crosstalk between insulin-sensitive tissues, intestinal L cells and pancreatic islets to adapt to changes in insulin demand. Also acts as a myokine. Plays a protective role during liver injury, being required for maintenance of tissue regeneration. Also has a pivotal role in iron metabolism by regulating HAMP/hepcidin expression upon inflammation or bacterial infection. Through activation of IL6ST-YAP-NOTCH pathway, induces inflammation-induced epithelial regeneration. The protein is Interleukin-6 (IL6) of Macaca thibetana (Pere David's macaque).